Here is a 682-residue protein sequence, read N- to C-terminus: PWWP domain-containing DNA repair factor 3A (682 aa).

At serine 105 the chain carries Phosphoserine. Positions glutamate 121 to glutamine 145 are disordered. Residues valine 127–leucine 140 show a composition bias toward low complexity. A Phosphoserine modification is found at serine 168. 2 disordered regions span residues glycine 179–proline 318 and glycine 334–proline 369. Residues histidine 203–proline 220 show a composition bias toward basic and acidic residues. 2 positions are modified to phosphoserine: serine 345 and serine 346. Over residues serine 346–serine 357 the composition is skewed to polar residues. In terms of domain architecture, PWWP spans valine 383–alanine 444.

This sequence belongs to the PWWP3A family. As to quaternary structure, interacts with TP53BP1 (via BRCT domain); the interaction is not dependent on its phosphorylation status. Binds nucleosomes. Interacts with trimethylated 'Lys-36' of histone H3 (H3K36me3) (in vitro).

It localises to the nucleus. Involved in the DNA damage response pathway by contributing to the maintenance of chromatin architecture. Recruited to the vicinity of DNA breaks by TP53BP1 and plays an accessory role to facilitate damage-induced chromatin changes and promoting chromatin relaxation. Required for efficient DNA repair and cell survival following DNA damage. The polypeptide is PWWP domain-containing DNA repair factor 3A (Pwwp3a) (Mus musculus (Mouse)).